The chain runs to 72 residues: UPF0270 protein KPN78578_37030 (72 aa).

This sequence belongs to the UPF0270 family.

In Klebsiella pneumoniae subsp. pneumoniae (strain ATCC 700721 / MGH 78578), this protein is UPF0270 protein KPN78578_37030.